A 281-amino-acid chain; its full sequence is Pantothenate synthetase (281 aa).

Position 30-37 (30-37 (MGYLHEGH)) interacts with ATP. Histidine 37 serves as the catalytic Proton donor. Glutamine 61 lines the (R)-pantoate pocket. Glutamine 61 serves as a coordination point for beta-alanine. 147–150 (GEKD) serves as a coordination point for ATP. Residue glutamine 153 participates in (R)-pantoate binding. Residues valine 176 and 184–187 (MSSR) each bind ATP.

It belongs to the pantothenate synthetase family. In terms of assembly, homodimer.

Its subcellular location is the cytoplasm. It carries out the reaction (R)-pantoate + beta-alanine + ATP = (R)-pantothenate + AMP + diphosphate + H(+). It functions in the pathway cofactor biosynthesis; (R)-pantothenate biosynthesis; (R)-pantothenate from (R)-pantoate and beta-alanine: step 1/1. In terms of biological role, catalyzes the condensation of pantoate with beta-alanine in an ATP-dependent reaction via a pantoyl-adenylate intermediate. The protein is Pantothenate synthetase of Desulfatibacillum aliphaticivorans.